A 1430-amino-acid chain; its full sequence is 3'-5' RNA helicase YTHDC2 (1430 aa).

The interval 1–37 (MSRPSSVSPRQPAPGGGGGGGPSPCGPGGGGRAKGLK) is disordered. Residues 14 to 33 (PGGGGGGGPSPCGPGGGGRA) are compositionally biased toward gly residues. Positions 38 to 106 (DIRIDEEVKI…NRYLTVKKKD (69 aa)) constitute an R3H domain. One can recognise a Helicase ATP-binding domain in the interval 203–369 (VKIIKENKVV…FGSCPVIYIQ (167 aa)). 216–223 (GETGSGKT) contacts ATP. The DEAH box motif lies at 316 to 319 (DEVH). ANK repeat units lie at residues 506–538 (TSATALMVAAGRGFASQVEQLISMGANVHSKAS) and 539–571 (NGWMALDWAKHFGQTEIVDLLESYSATLEFGNL). The region spanning 612-784 (LLYNICHSCD…ELCLHTKLLA (173 aa)) is the Helicase C-terminal domain. Phosphoserine is present on residues S1089, S1090, and S1092. Polar residues predominate over residues 1164–1174 (EQSAGLQQPSG). A disordered region spans residues 1164–1288 (EQSAGLQQPS…SPSPRPNMPV (125 aa)). Low complexity predominate over residues 1191–1200 (SSWRSNNSRK). S1202 is modified (phosphoserine). Basic and acidic residues predominate over residues 1231 to 1249 (KYKDRGILHPKRGTEDRSD). Residues 1250-1264 (QSSLKSTDSSSYPSP) show a composition bias toward low complexity. Phosphoserine occurs at positions 1263, 1267, and 1281. In terms of domain architecture, YTH spans 1288-1418 (VRYFIMKSSN…LVGEQLLQLW (131 aa)). Residues 1294–1296 (KSS), W1310, and W1360 each bind RNA.

It belongs to the DEAD box helicase family. DEAH subfamily. As to quaternary structure, interacts with MEIOC; binds transcripts that regulate the mitotic cell cycle inhibiting progression into metaphase, thereby allowing meiotic prophase to proceed normally. Interacts (via ANK repeats) with XRN1. Interacts with ZCCHC4. Associates with the small ribosomal subunit. Interacts with RBM46. As to expression, expressed in testis. Not detected in spermatogonia next to the tubule wall but is strongly expressed in spermatocytes, suggesting that it is up-regulated in germ cells upon entry into meiosis.

The protein resides in the cytoplasm. The protein localises to the perinuclear region. The catalysed reaction is ATP + H2O = ADP + phosphate + H(+). Its function is as follows. 3'-5' RNA helicase that plays a key role in the male and female germline by promoting transition from mitotic to meiotic divisions in stem cells. Specifically recognizes and binds N6-methyladenosine (m6A)-containing RNAs, a modification present at internal sites of mRNAs and some non-coding RNAs that plays a role in the efficiency of RNA processing and stability. Essential for ensuring a successful progression of the meiotic program in the germline by regulating the level of m6A-containing RNAs. Acts by binding and promoting degradation of m6A-containing mRNAs: the 3'-5' RNA helicase activity is required for this process and RNA degradation may be mediated by XRN1 exoribonuclease. Required for both spermatogenesis and oogenesis. This is 3'-5' RNA helicase YTHDC2 from Homo sapiens (Human).